The sequence spans 287 residues: tRNA-cytidine(32) 2-sulfurtransferase (287 aa).

Residues 39–44 (SGGKDS) carry the PP-loop motif motif. [4Fe-4S] cluster-binding residues include C114, C117, and C205.

Belongs to the TtcA family. As to quaternary structure, homodimer. Mg(2+) is required as a cofactor. The cofactor is [4Fe-4S] cluster.

The protein resides in the cytoplasm. It carries out the reaction cytidine(32) in tRNA + S-sulfanyl-L-cysteinyl-[cysteine desulfurase] + AH2 + ATP = 2-thiocytidine(32) in tRNA + L-cysteinyl-[cysteine desulfurase] + A + AMP + diphosphate + H(+). It functions in the pathway tRNA modification. Catalyzes the ATP-dependent 2-thiolation of cytidine in position 32 of tRNA, to form 2-thiocytidine (s(2)C32). The sulfur atoms are provided by the cysteine/cysteine desulfurase (IscS) system. The protein is tRNA-cytidine(32) 2-sulfurtransferase of Dechloromonas aromatica (strain RCB).